The following is a 492-amino-acid chain: Catalase (492 aa).

Catalysis depends on residues histidine 65 and asparagine 138. A heme-binding site is contributed by tyrosine 348.

Belongs to the catalase family. In terms of assembly, homotetramer. It depends on heme as a cofactor. In terms of tissue distribution, in stems, leaves, roots and developing fruits.

It is found in the cytoplasm. The protein resides in the cytosol. Its subcellular location is the peroxisome matrix. It carries out the reaction 2 H2O2 = O2 + 2 H2O. Catalyzes the degradation of hydrogen peroxide (H(2)O(2)) generated by peroxisomal oxidases to water and oxygen, thereby protecting cells from the toxic effects of hydrogen peroxide. In Capsicum annuum (Capsicum pepper), this protein is Catalase (CAT).